The primary structure comprises 155 residues: SGSQDLEPSSGLVTDAIADSESEDDEDLDVPIPSRFDRRVSVCAETYNPDEEEEDTDPRVIHPKTDQQRCRLQEACKDILLFKNLDQEQLSQVLDAMFERTVKVDEHVIDQRDDGDNFYVIERGTYDILVTKDNQTRSVGQYDNHGSFGELALMY.

A disordered region spans residues 1-34 (SGSQDLEPSSGLVTDAIADSESEDDEDLDVPIPS). A dimerization and phosphorylation region spans residues 1–81 (SGSQDLEPSS…LQEACKDILL (81 aa)). Residues 18–29 (ADSESEDDEDLD) show a composition bias toward acidic residues. 2 positions are modified to phosphoserine: S20 and S22. S41 bears the Phosphoserine; by PKA mark. Residues 82–155 (FKNL…ALMY) and E150 each bind 3',5'-cyclic AMP.

The protein belongs to the cAMP-dependent kinase regulatory chain family. As to quaternary structure, the inactive form of the enzyme is composed of two regulatory chains and two catalytic chains. Activation by cAMP produces two active catalytic monomers and a regulatory dimer that binds four cAMP molecules. Interacts with AKAP4 and CBFA2T3. Interacts with the phosphorylated form of PJA2. Interacts with MYRIP; this interaction may link PKA to components of the exocytosis machinery, thus facilitating exocytosis, including insulin release. Forms a complex composed of PRKAR2A, GSK3B and GSKIP through GSKIP interaction; facilitates PKA-induced phosphorylation and regulates GSK3B activity. Interacts with ADCY8; inhibits adenylate cyclase activity through PKA phosphorylation. Phosphorylated by the activated catalytic chain. In terms of tissue distribution, four types of regulatory chains are found: I-alpha, I-beta, II-alpha, and II-beta. Their expression varies among tissues and is in some cases constitutive and in others inducible.

It localises to the cytoplasm. Its subcellular location is the cell membrane. Regulatory subunit of the cAMP-dependent protein kinases involved in cAMP signaling in cells. Type II regulatory chains mediate membrane association by binding to anchoring proteins, including the MAP2 kinase. This is cAMP-dependent protein kinase type II-alpha regulatory subunit (PRKAR2A) from Sus scrofa (Pig).